Consider the following 597-residue polypeptide: Elongation factor 4 (597 aa).

Residues 2 to 184 (KNIRNFSIIA…SIVEHLPAPE (183 aa)) form the tr-type G domain. Residues 14–19 (DHGKST) and 131–134 (NKID) contribute to the GTP site.

The protein belongs to the TRAFAC class translation factor GTPase superfamily. Classic translation factor GTPase family. LepA subfamily.

It localises to the cell inner membrane. It catalyses the reaction GTP + H2O = GDP + phosphate + H(+). Its function is as follows. Required for accurate and efficient protein synthesis under certain stress conditions. May act as a fidelity factor of the translation reaction, by catalyzing a one-codon backward translocation of tRNAs on improperly translocated ribosomes. Back-translocation proceeds from a post-translocation (POST) complex to a pre-translocation (PRE) complex, thus giving elongation factor G a second chance to translocate the tRNAs correctly. Binds to ribosomes in a GTP-dependent manner. This is Elongation factor 4 from Desulfotalea psychrophila (strain LSv54 / DSM 12343).